Here is a 302-residue protein sequence, read N- to C-terminus: 4-hydroxy-tetrahydrodipicolinate synthase (302 aa).

Thr-57 provides a ligand contact to pyruvate. Tyr-145 serves as the catalytic Proton donor/acceptor. Residue Lys-173 is the Schiff-base intermediate with substrate of the active site. Ile-213 serves as a coordination point for pyruvate.

The protein belongs to the DapA family. In terms of assembly, homotetramer; dimer of dimers.

The protein resides in the cytoplasm. It catalyses the reaction L-aspartate 4-semialdehyde + pyruvate = (2S,4S)-4-hydroxy-2,3,4,5-tetrahydrodipicolinate + H2O + H(+). It functions in the pathway amino-acid biosynthesis; L-lysine biosynthesis via DAP pathway; (S)-tetrahydrodipicolinate from L-aspartate: step 3/4. Catalyzes the condensation of (S)-aspartate-beta-semialdehyde [(S)-ASA] and pyruvate to 4-hydroxy-tetrahydrodipicolinate (HTPA). The chain is 4-hydroxy-tetrahydrodipicolinate synthase from Mycolicibacterium gilvum (strain PYR-GCK) (Mycobacterium gilvum (strain PYR-GCK)).